The sequence spans 473 residues: MQPFVLYNSEQRKKVEFVPRKPGHIDMYVCGMTVYDYCHIGHARVMVAFDYIIRFLRSQGWDVRYIRNITDIDDKIIKRANENNETIQQLTSRFIDAMNEDAAKLGCAEPDEAPKATEYIGEMQNMISTLVDKGSAYPASNGDVYFEVSKFEKYGRLSGRKLEDMQAGASERVDIEVEKKHPFDFVLWKGAKPNEPSWVSPWGNGRPGWHIECSAMSTCCLGNHFDIHGGGSDLTFPHHENEIAQSEASTGEQYVNYWMHVGFINVDGEKMSKSLGNFFTIRDVMEKFHPEVIRYFIVSSHYRSPVNFSDVALKEAKTALTRFYHAFKAYEQVYGQNDSTQKDEQFIERFNIAMRDDFNTPEAIAVLFELNRELNRAVKEQQAEQAAIYYVTLRHLTQILGLVQHDVDEFLKSDIGQEVLSLSDDEIQAMIQQRADAKKAKDFSGADAIRQALLDQGVVLEDTRQGTLWRRAD.

Position 30 (cysteine 30) interacts with Zn(2+). The 'HIGH' region motif lies at 32–42 (MTVYDYCHIGH). Zn(2+)-binding residues include cysteine 213, histidine 238, and glutamate 242. Residues 270-274 (KMSKS) carry the 'KMSKS' region motif. ATP is bound at residue lysine 273.

Belongs to the class-I aminoacyl-tRNA synthetase family. As to quaternary structure, monomer. Zn(2+) is required as a cofactor.

The protein resides in the cytoplasm. The enzyme catalyses tRNA(Cys) + L-cysteine + ATP = L-cysteinyl-tRNA(Cys) + AMP + diphosphate. This is Cysteine--tRNA ligase from Acinetobacter baylyi (strain ATCC 33305 / BD413 / ADP1).